Here is a 658-residue protein sequence, read N- to C-terminus: Heat shock 70 kDa protein, mitochondrial (658 aa).

Residues 629-658 (KLDSSASKSSSTENKENKDNTTEAEFTEKK) are disordered. The segment covering 631–640 (DSSASKSSST) has biased composition (low complexity). Over residues 641–658 (ENKENKDNTTEAEFTEKK) the composition is skewed to basic and acidic residues.

It belongs to the heat shock protein 70 family.

The protein resides in the mitochondrion. Its function is as follows. May function in protein folding and assembly, and disassembly of protein complexes. The chain is Heat shock 70 kDa protein, mitochondrial (mhsp70) from Dictyostelium discoideum (Social amoeba).